We begin with the raw amino-acid sequence, 48 residues long: Cuticle protein 10 (48 aa).

This is Cuticle protein 10 from Limulus polyphemus (Atlantic horseshoe crab).